We begin with the raw amino-acid sequence, 379 residues long: 1-deoxy-D-xylulose 5-phosphate reductoisomerase (379 aa).

Residues Thr-10, Gly-11, Ser-12, Ile-13, Asn-39, and Asn-121 each contribute to the NADPH site. Lys-122 is a 1-deoxy-D-xylulose 5-phosphate binding site. Residue Glu-123 coordinates NADPH. Asp-147 is a Mn(2+) binding site. The 1-deoxy-D-xylulose 5-phosphate site is built by Ser-148, Glu-149, Ser-173, and His-196. Glu-149 contributes to the Mn(2+) binding site. Position 202 (Gly-202) interacts with NADPH. 1-deoxy-D-xylulose 5-phosphate contacts are provided by Ser-209, Asn-214, Lys-215, and Glu-218. Glu-218 contacts Mn(2+).

This sequence belongs to the DXR family. Mg(2+) serves as cofactor. It depends on Mn(2+) as a cofactor.

The enzyme catalyses 2-C-methyl-D-erythritol 4-phosphate + NADP(+) = 1-deoxy-D-xylulose 5-phosphate + NADPH + H(+). It participates in isoprenoid biosynthesis; isopentenyl diphosphate biosynthesis via DXP pathway; isopentenyl diphosphate from 1-deoxy-D-xylulose 5-phosphate: step 1/6. Its function is as follows. Catalyzes the NADPH-dependent rearrangement and reduction of 1-deoxy-D-xylulose-5-phosphate (DXP) to 2-C-methyl-D-erythritol 4-phosphate (MEP). This Chlamydia pneumoniae (Chlamydophila pneumoniae) protein is 1-deoxy-D-xylulose 5-phosphate reductoisomerase.